The primary structure comprises 277 residues: Inositol monophosphatase 1 (277 aa).

Positions 70, 90, 92, and 93 each coordinate Mg(2+). Glu-70 is a binding site for substrate. 92-95 (IDGT) contacts substrate. The residue at position 168 (Thr-168) is a Phosphothreonine. Substrate-binding positions include 194–196 (GTA), Glu-213, and Asp-220. Asp-220 serves as a coordination point for Mg(2+).

The protein belongs to the inositol monophosphatase superfamily. In terms of assembly, homodimer. The cofactor is Mg(2+). The N-terminus is blocked.

The protein localises to the cytoplasm. It carries out the reaction a myo-inositol phosphate + H2O = myo-inositol + phosphate. It catalyses the reaction 1D-myo-inositol 1-phosphate + H2O = myo-inositol + phosphate. The enzyme catalyses 1D-myo-inositol 2-phosphate + H2O = myo-inositol + phosphate. The catalysed reaction is 1D-myo-inositol 3-phosphate + H2O = myo-inositol + phosphate. It carries out the reaction 1D-myo-inositol 4-phosphate + H2O = myo-inositol + phosphate. It catalyses the reaction 1D-myo-inositol 5-phosphate + H2O = myo-inositol + phosphate. The enzyme catalyses 1D-myo-inositol 6-phosphate + H2O = myo-inositol + phosphate. The catalysed reaction is scyllo-inositol 1-phosphate + H2O = scyllo-inositol + phosphate. It carries out the reaction alpha-D-galactose 1-phosphate + H2O = D-galactose + phosphate. It catalyses the reaction alpha-D-glucose 1-phosphate + H2O = D-glucose + phosphate. The enzyme catalyses D-glucose 6-phosphate + H2O = D-glucose + phosphate. The catalysed reaction is beta-D-fructose 1-phosphate + H2O = D-fructose + phosphate. It carries out the reaction glycerol 2-phosphate + H2O = glycerol + phosphate. It catalyses the reaction adenosine 2'-phosphate + H2O = adenosine + phosphate. The protein operates within polyol metabolism; myo-inositol biosynthesis; myo-inositol from D-glucose 6-phosphate: step 2/2. Activity with myo-inositol monophosphate and D-galactose 1-phosphate is inhibited by Li(+), Ca(2+) and Mn(2+), but also by Mg(2+) at concentrations above 3 mM. In terms of biological role, phosphatase involved in the dephosphorylation of myo-inositol monophosphate to generate myo-inositol. Is also able to dephosphorylate scyllo-inositol-phosphate, myo-inositol 1,4-diphosphate, scyllo-inositol-1,3-diphosphate and scyllo-inositol-1,4-diphosphate. Also dephosphorylates in vitro other sugar-phosphates including D-galactose-1-phosphate, glucose-1-phosphate, glucose-6-phosphate, fructose-1-phosphate, beta-glycerophosphate and 2'-AMP. Responsible for the provision of inositol required for synthesis of phosphatidylinositol and polyphosphoinositides, and involved in maintaining normal brain function. Has been implicated as the pharmacological target for lithium Li(+) action in brain. Is equally active with myo-inositol monophosphate and D-galactose 1-phosphate. This chain is Inositol monophosphatase 1 (IMPA1), found in Bos taurus (Bovine).